The following is a 103-amino-acid chain: Large ribosomal subunit protein bL21 (103 aa).

The protein belongs to the bacterial ribosomal protein bL21 family. As to quaternary structure, part of the 50S ribosomal subunit. Contacts protein L20.

This protein binds to 23S rRNA in the presence of protein L20. In Actinobacillus pleuropneumoniae serotype 7 (strain AP76), this protein is Large ribosomal subunit protein bL21.